The primary structure comprises 299 residues: N-acetylmuramic acid 6-phosphate etherase (299 aa).

The region spanning T54–K217 is the SIS domain. The active-site Proton donor is the E82. The active site involves E113.

The protein belongs to the GCKR-like family. MurNAc-6-P etherase subfamily. In terms of assembly, homodimer.

It catalyses the reaction N-acetyl-D-muramate 6-phosphate + H2O = N-acetyl-D-glucosamine 6-phosphate + (R)-lactate. The protein operates within amino-sugar metabolism; N-acetylmuramate degradation. Specifically catalyzes the cleavage of the D-lactyl ether substituent of MurNAc 6-phosphate, producing GlcNAc 6-phosphate and D-lactate. This Staphylococcus aureus (strain USA300) protein is N-acetylmuramic acid 6-phosphate etherase.